The chain runs to 864 residues: Carbohydrate-responsive element-binding protein (864 aa).

Disordered stretches follow at residues 15 to 41 (PRVV…AGGL) and 53 to 77 (MVSS…LADF). A phosphoserine mark is found at Ser-20, Ser-23, and Ser-25. The residue at position 27 (Thr-27) is a Phosphothreonine. Position 196 is a phosphoserine (Ser-196). Disordered stretches follow at residues 332-397 (SSGI…APGP), 449-468 (PGVS…QPGP), 489-533 (PHFT…TARD), 547-570 (PEQA…PQDT), and 583-602 (PIPA…LAPP). Positions 351-368 (GMTPHSGNTRLQARNSCS) are enriched in polar residues. Residues 513 to 531 (ASPPTLASATASPTATATA) are compositionally biased toward low complexity. Residue Ser-566 is modified to Phosphoserine; by AMPK. Residues 583–596 (PIPAPTPPRPPPGP) show a composition bias toward pro residues. A phosphoserine mark is found at Ser-614, Ser-626, and Ser-643. Positions 661–715 (NRRITHISAEQKRRFNIKLGFDTLHGLVSTLSAQPSLKVSKATTLQKTAEYILML) constitute a bHLH domain. The tract at residues 715-736 (LQQERAAMQEEAQQLRDEIEEL) is leucine-zipper.

In terms of assembly, binds DNA as a heterodimer with TCFL4/MLX. Phosphorylation at Ser-566 by AMPK inactivates the DNA-binding activity. As to expression, expressed in the ventricular and intermediate zones of the developing spinal cord of 12.5 dpc embryos. In later embryos expressed in a variety of tissues.

It localises to the nucleus. Functionally, transcriptional repressor. Binds to the canonical and non-canonical E box sequences 5'-CACGTG-3'. This is Carbohydrate-responsive element-binding protein (Mlxipl) from Mus musculus (Mouse).